We begin with the raw amino-acid sequence, 243 residues long: 2,3-bisphosphoglycerate-dependent phosphoglycerate mutase (243 aa).

Residues 8–15, 21–22, Arg-60, 87–90, Lys-98, 114–115, and 183–184 contribute to the substrate site; these read RHGQSEWN, TG, ERHY, RR, and GN. The active-site Tele-phosphohistidine intermediate is His-9. Glu-87 serves as the catalytic Proton donor/acceptor.

It belongs to the phosphoglycerate mutase family. BPG-dependent PGAM subfamily.

It catalyses the reaction (2R)-2-phosphoglycerate = (2R)-3-phosphoglycerate. It participates in carbohydrate degradation; glycolysis; pyruvate from D-glyceraldehyde 3-phosphate: step 3/5. Its function is as follows. Catalyzes the interconversion of 2-phosphoglycerate and 3-phosphoglycerate. The polypeptide is 2,3-bisphosphoglycerate-dependent phosphoglycerate mutase (Clostridium acetobutylicum (strain ATCC 824 / DSM 792 / JCM 1419 / IAM 19013 / LMG 5710 / NBRC 13948 / NRRL B-527 / VKM B-1787 / 2291 / W)).